A 237-amino-acid polypeptide reads, in one-letter code: 4'-phosphopantetheinyl transferase gsp (237 aa).

Residues Asp-106, Glu-108, and Glu-150 each contribute to the Mg(2+) site.

The protein belongs to the P-Pant transferase superfamily. Gsp/Sfp/HetI/AcpT family. Mg(2+) serves as cofactor.

It catalyses the reaction apo-[peptidyl-carrier protein] + CoA = holo-[peptidyl-carrier protein] + adenosine 3',5'-bisphosphate + H(+). Its function is as follows. Activates the five peptidyl carrier protein (PCP) domains of gramicidin synthase GrsAB, by transferring the 4'-phosphopantetheinyl moiety of coenzyme A (CoA) to a serine residue. Required for gramicidin S production. This is 4'-phosphopantetheinyl transferase gsp (gsp) from Aneurinibacillus migulanus (Bacillus migulanus).